The sequence spans 78 residues: Translational regulator CsrA (78 aa).

This sequence belongs to the CsrA/RsmA family. Homodimer; the beta-strands of each monomer intercalate to form a hydrophobic core, while the alpha-helices form wings that extend away from the core.

Its subcellular location is the cytoplasm. Functionally, a translational regulator that binds mRNA to regulate translation initiation and/or mRNA stability. Usually binds in the 5'-UTR at or near the Shine-Dalgarno sequence preventing ribosome-binding, thus repressing translation. Its main target seems to be the major flagellin gene, while its function is anatagonized by FliW. In Desulfotalea psychrophila (strain LSv54 / DSM 12343), this protein is Translational regulator CsrA.